The primary structure comprises 423 residues: Glutamate--cysteine ligase EgtA (423 aa).

Belongs to the glutamate--cysteine ligase type 2 family. EgtA subfamily.

It catalyses the reaction L-cysteine + L-glutamate + ATP = gamma-L-glutamyl-L-cysteine + ADP + phosphate + H(+). The protein operates within amino-acid biosynthesis; ergothioneine biosynthesis. Its function is as follows. Catalyzes the synthesis of gamma-glutamylcysteine (gamma-GC). This compound is used as substrate for the biosynthesis of the low-molecular thiol compound ergothioneine. This Mycolicibacterium smegmatis (strain ATCC 700084 / mc(2)155) (Mycobacterium smegmatis) protein is Glutamate--cysteine ligase EgtA.